The sequence spans 634 residues: MRIDCTVASLTALASGCQALSTRPYVPRGHSLSRRDDSAPIYRDASYCIDERVDDLLARMTIEEKAGQLFHTRLMDGPLDDEGSGNNAHNSTSNMIGEKHMTHFNLASDITNATETAEFINRIQELALQTRLGIPVTVSTDPRHSFTENVGTGFKAGVFSQWPESIGLAALRDPYVVRKFAEVAKEEYIAVGIRAALHPQVDLSTEPRWARISNTWGENSTLTSELLVEYIKGFQGDKLGPQSVKTVTKHFPGGGPVENGEDSHFAYGKNQTYPGNNLEEHLKPFKAAIAAGATEIMPYYSRPIGTEYEPVAFSFNKRIVTELLRNELGFEGIVLTDWGLITDGYIAGQYMPARAWGVENLTELERAARILDAGCDQFGGEERPELIVQLVQEGTVSEDRIDVSVRRLLREKFVLGLFDNPFVDPESAGRVVGNDYFVRLGREAQRRSYTLLSNNEDIVPLKKIEQSTKFYIEGFNASFIESWNYTVVDSPEEADYALLRYNAPYEPRPGGFEANMHAGSLAFNDTEKARQAKIYSTVPTIVDIVMDRPAVIPEIIEQAKAVFASYGSDSNAFLDVVFGVSAPEGKLPFDLPSSMEAVEAQMEDVPFDTRNPVFKFGHGLSYANPCASSSSKCS.

The first 19 residues, 1-19 (MRIDCTVASLTALASGCQA), serve as a signal peptide directing secretion. Asparagine 90, asparagine 112, asparagine 219, and asparagine 270 each carry an N-linked (GlcNAc...) asparagine glycan. Aspartate 337 is a catalytic residue. Residues asparagine 360, asparagine 476, asparagine 484, and asparagine 524 are each glycosylated (N-linked (GlcNAc...) asparagine).

This sequence belongs to the glycosyl hydrolase 3 family.

It localises to the secreted. The catalysed reaction is Hydrolysis of terminal, non-reducing beta-D-glucosyl residues with release of beta-D-glucose.. It functions in the pathway glycan metabolism; cellulose degradation. Functionally, beta-glucosidases are one of a number of cellulolytic enzymes involved in the degradation of cellulosic biomass. Catalyzes the last step releasing glucose from the inhibitory cellobiose. This Aspergillus flavus (strain ATCC 200026 / FGSC A1120 / IAM 13836 / NRRL 3357 / JCM 12722 / SRRC 167) protein is Probable beta-glucosidase C (bglC).